The primary structure comprises 56 residues: Preprotein translocase subunit SecG (56 aa).

Topologically, residues 1-29 are cytoplasmic; that stretch reads MAKDKTTLPPTGAGLMRFFDEDTRAIKVS. The helical transmembrane segment at 30–51 threads the bilayer; the sequence is PKGVIAIVLVLIAFEVFLHLFG. At 52–56 the chain is on the extracellular side; the sequence is PSIFG.

The protein belongs to the SEC61-beta family. Component of the protein translocase complex. Heterotrimer consisting of alpha (SecY), beta (SecG) and gamma (SecE) subunits. Can form oligomers of the heterotrimer.

Its subcellular location is the cell membrane. Involved in protein export. The function of the beta subunit is unknown, but it may be involved in stabilization of the trimeric complex. The protein is Preprotein translocase subunit SecG of Thermococcus gammatolerans (strain DSM 15229 / JCM 11827 / EJ3).